A 357-amino-acid polypeptide reads, in one-letter code: Geranylgeranyl pyrophosphate synthase 11, chloroplastic (357 aa).

Residues 1-37 (MATTLSSSSLFIQFRGRRYNSLSSFNNLQKRTVLSLS) constitute a chloroplast transit peptide. Isopentenyl diphosphate is bound by residues lysine 103, arginine 106, and histidine 135. Residues aspartate 142 and aspartate 148 each contribute to the Mg(2+) site. Residue arginine 153 coordinates dimethylallyl diphosphate. Arginine 154 contributes to the isopentenyl diphosphate binding site. Residues lysine 242, threonine 243, glutamine 280, lysine 297, and lysine 307 each coordinate dimethylallyl diphosphate.

This sequence belongs to the FPP/GGPP synthase family. Monomer. Mg(2+) is required as a cofactor.

It is found in the plastid. The protein resides in the chloroplast. The enzyme catalyses isopentenyl diphosphate + dimethylallyl diphosphate = (2E)-geranyl diphosphate + diphosphate. It carries out the reaction isopentenyl diphosphate + (2E)-geranyl diphosphate = (2E,6E)-farnesyl diphosphate + diphosphate. The catalysed reaction is isopentenyl diphosphate + (2E,6E)-farnesyl diphosphate = (2E,6E,10E)-geranylgeranyl diphosphate + diphosphate. The protein operates within isoprenoid biosynthesis; farnesyl diphosphate biosynthesis; farnesyl diphosphate from geranyl diphosphate and isopentenyl diphosphate: step 1/1. Its pathway is isoprenoid biosynthesis; geranyl diphosphate biosynthesis; geranyl diphosphate from dimethylallyl diphosphate and isopentenyl diphosphate: step 1/1. It functions in the pathway isoprenoid biosynthesis; geranylgeranyl diphosphate biosynthesis; geranylgeranyl diphosphate from farnesyl diphosphate and isopentenyl diphosphate: step 1/1. Functionally, catalyzes the trans-addition of the three molecules of IPP onto DMAPP to form geranylgeranyl pyrophosphate. This Arabidopsis thaliana (Mouse-ear cress) protein is Geranylgeranyl pyrophosphate synthase 11, chloroplastic.